The chain runs to 307 residues: Shikimate kinase 2, chloroplastic (307 aa).

The transit peptide at Met1–Tyr60 directs the protein to the chloroplast. Gly101 to Ser108 lines the ATP pocket. Ser108 provides a ligand contact to Mg(2+). Residues Asp126, Arg151, and Gly173 each contribute to the substrate site. Residue Arg212 coordinates ATP. Positions His285–Leu307 are disordered.

This sequence belongs to the shikimate kinase family. It depends on Mg(2+) as a cofactor. Expressed in panicles.

The protein resides in the plastid. It localises to the chloroplast. It catalyses the reaction shikimate + ATP = 3-phosphoshikimate + ADP + H(+). It participates in metabolic intermediate biosynthesis; chorismate biosynthesis; chorismate from D-erythrose 4-phosphate and phosphoenolpyruvate: step 5/7. Functionally, catalyzes the specific phosphorylation of the 3-hydroxyl group of shikimic acid using ATP as a cosubstrate. The sequence is that of Shikimate kinase 2, chloroplastic (SK2) from Oryza sativa subsp. japonica (Rice).